The following is a 591-amino-acid chain: Phenylalanine--tRNA ligase beta subunit (591 aa).

The B5 domain maps to 304 to 380 (LSYREMTVTT…VAFGYNNLIT (77 aa)). The Mg(2+) site is built by D358, D364, E367, and D368.

The protein belongs to the phenylalanyl-tRNA synthetase beta subunit family. Type 2 subfamily. As to quaternary structure, tetramer of two alpha and two beta subunits. Mg(2+) serves as cofactor.

Its subcellular location is the cytoplasm. The catalysed reaction is tRNA(Phe) + L-phenylalanine + ATP = L-phenylalanyl-tRNA(Phe) + AMP + diphosphate + H(+). The protein is Phenylalanine--tRNA ligase beta subunit of Caenorhabditis elegans.